A 396-amino-acid polypeptide reads, in one-letter code: Tryptophan synthase beta chain (396 aa).

Lys86 is subject to N6-(pyridoxal phosphate)lysine.

It belongs to the TrpB family. Tetramer of two alpha and two beta chains. It depends on pyridoxal 5'-phosphate as a cofactor.

It carries out the reaction (1S,2R)-1-C-(indol-3-yl)glycerol 3-phosphate + L-serine = D-glyceraldehyde 3-phosphate + L-tryptophan + H2O. The protein operates within amino-acid biosynthesis; L-tryptophan biosynthesis; L-tryptophan from chorismate: step 5/5. The beta subunit is responsible for the synthesis of L-tryptophan from indole and L-serine. The chain is Tryptophan synthase beta chain from Francisella tularensis subsp. novicida (strain U112).